Here is a 398-residue protein sequence, read N- to C-terminus: Metal tolerance protein 1 (398 aa).

Residues 1–56 lie on the Cytoplasmic side of the membrane; the sequence is MESSSPHHSHIVEVNVGKSDEERIIVASKVCGEAPCGFSDSKNASGDAHERSASMR. The chain crosses the membrane as a helical span at residues 57 to 77; the sequence is KLCIAVVLCLVFMSVEVVGGI. Residues 78 to 89 lie on the Vacuolar side of the membrane; sequence KANSLAILTDAA. The chain crosses the membrane as a helical span at residues 90–110; that stretch reads HLLSDVAAFAISLFSLWAAGW. The Cytoplasmic portion of the chain corresponds to 111 to 122; that stretch reads EATPRQTYGFFR. A helical transmembrane segment spans residues 123-143; that stretch reads IEILGALVSIQLIWLLTGILV. At 144–159 the chain is on the vacuolar side; it reads YEAIIRIVTETSEVNG. Residues 160–180 traverse the membrane as a helical segment; the sequence is FLMFLVAAFGLVVNIIMAVLL. At 181–263 the chain is on the cytoplasmic side; the sequence is GHDHGHSHGH…KRNINLQGAY (83 aa). Residues 182–232 form a required for zinc-binding region; the sequence is HDHGHSHGHGHGHGHDHHNHSHGVTVTTHHHHHDHEHGHSHGHGEDKHHAH. Residues 186–232 are disordered; sequence HSHGHGHGHGHDHHNHSHGVTVTTHHHHHDHEHGHSHGHGEDKHHAH. Residues 187 to 202 show a composition bias toward basic residues; that stretch reads SHGHGHGHGHDHHNHS. The span at 216-232 shows a compositional bias: basic and acidic residues; that stretch reads HEHGHSHGHGEDKHHAH. A helical membrane pass occupies residues 264 to 284; sequence LHVLGDSIQSVGVMIGGAIIW. The Vacuolar segment spans residues 285 to 290; the sequence is YNPEWK. A helical transmembrane segment spans residues 291 to 311; sequence IVDLICTLAFSVIVLGTTINM. The Cytoplasmic portion of the chain corresponds to 312–398; that stretch reads IRNILEVLME…ISHVTIQIER (87 aa).

It belongs to the cation diffusion facilitator (CDF) transporter (TC 2.A.4) family. SLC30A subfamily. As to expression, ubiquitously expressed at low levels.

The protein resides in the vacuole membrane. In terms of biological role, mediates zinc accumulation in roots and confers resistance to zinc. Involved in sequestration of excess zinc in the cytoplasm into vacuoles to maintain zinc homeostasis. Can also transport cadmium with a low efficiency. The protein is Metal tolerance protein 1 of Arabidopsis thaliana (Mouse-ear cress).